The sequence spans 346 residues: MHSSLIKLGFLLLLIQVSLSHAQLSPSFYDKTCPQVFDIATTTIVNALRSDPRIAASILRLHFHDCFVNGCDASILLDNTTSFRTEKDAFGNANSARGFDVIDKMKAAVEKACPKTVSCADLLAIAAQESVVLAGGPSWRVPNGRRDSLRGFMDLANDNLPAPFFTLNQLKDRFKNVGLDRASDLVALSGGHTFGKNQCQFIMDRLYNFSNTGLPDPTLDKSYLSTLRKQCPRNGNQSVLVDFDLRTPTLFDNKYYVNLKENKGLIQSDQELFSSPDASDTLPLVREYADGQGKFFDAFAKAMIRMSSLSPLTGKQGEIRLNCRVVNSKSKIMDVVEDALEFASSM.

The N-terminal stretch at 1–22 (MHSSLIKLGFLLLLIQVSLSHA) is a signal peptide. Gln23 is modified (pyrrolidone carboxylic acid). Intrachain disulfides connect Cys33-Cys113, Cys66-Cys71, Cys119-Cys323, and Cys199-Cys231. Catalysis depends on His64, which acts as the Proton acceptor. Asp65, Val68, Gly70, Asp72, and Ser74 together coordinate Ca(2+). Asn79 is a glycosylation site (N-linked (GlcNAc...) asparagine). Pro161 serves as a coordination point for substrate. His192 contacts heme b. Residue Thr193 participates in Ca(2+) binding. Residues Asn208 and Asn236 are each glycosylated (N-linked (GlcNAc...) asparagine). Asp244, Thr247, and Asp252 together coordinate Ca(2+).

It belongs to the peroxidase family. Classical plant (class III) peroxidase subfamily. Heme b is required as a cofactor. Ca(2+) serves as cofactor.

The protein resides in the secreted. It is found in the vacuole. It carries out the reaction 2 a phenolic donor + H2O2 = 2 a phenolic radical donor + 2 H2O. In terms of biological role, removal of H(2)O(2), oxidation of toxic reductants, biosynthesis and degradation of lignin, suberization, auxin catabolism, response to environmental stresses such as wounding, pathogen attack and oxidative stress. These functions might be dependent on each isozyme/isoform in each plant tissue. This Arabidopsis thaliana (Mouse-ear cress) protein is Peroxidase 37 (PER37).